The primary structure comprises 500 residues: MENPLCVSIFLFYCILIQSSAHGQSLGPESFGRRSRAAETNKTPQETRTKFLLFRGETDKGCQILLNHSDTLQQCGFNSSLPLVMIVHGWLVDDILEDWVWEMVAALKSQLAQSVNVGLAEWVTLAHNHYTTAVRNTRLVGQEIAALLQWLQESVQFSPSHVHLIGYSLGAHVSGFAGSYMSRKHKIGRITGLDAAGPLFEKASLSDRLSPDDANFVDAIHTFTWEHMGLSVGMKQPIAHYDFYPNGGSYQPGCHFLELYKHFAKHGLNAITRTVKCAHERSVHLFIDSLLHADMQSMAYLCRDMDRFSQGLCLSCKKGRCNTLGYHTRQERQSKKSKSLFLVTRAQSPFKVYHYQFKIRFINQTENPVEPTFTVSFLGTRGERQKIPITLSKGITSNETYSFLITLDVDIGELIMIKFKWENRMVWSNVWNTVQTIIPWGRGSLHSGLALKSIRVKVGETQQRMTFCSENMNDLLLHPAREKTFVRCEANSETLKRKIR.

The first 21 residues, M1 to A21, serve as a signal peptide directing secretion. Residues G23 to P44 form a disordered region. N-linked (GlcNAc...) asparagine glycans are attached at residues N67 and N78. S168 serves as the catalytic Nucleophile. D194 functions as the Charge relay system in the catalytic mechanism. Residues C254–C277 form an essential for determining substrate specificity region. H279 serves as the catalytic Charge relay system. Residues Y353–R487 form the PLAT domain. N-linked (GlcNAc...) asparagine glycans are attached at residues N363 and N398.

The protein belongs to the AB hydrolase superfamily. Lipase family. As to quaternary structure, homodimer.

Its subcellular location is the secreted. It catalyses the reaction a triacylglycerol + H2O = a diacylglycerol + a fatty acid + H(+). It carries out the reaction a 1-acyl-sn-glycero-3-phosphocholine + H2O = sn-glycerol 3-phosphocholine + a fatty acid + H(+). The enzyme catalyses a 1,2-diacyl-sn-glycero-3-phosphocholine + H2O = a 2-acyl-sn-glycero-3-phosphocholine + a fatty acid + H(+). The catalysed reaction is 1,2,3-tri-(9Z-octadecenoyl)-glycerol + H2O = di-(9Z)-octadecenoylglycerol + (9Z)-octadecenoate + H(+). It catalyses the reaction 1,2-di-(9Z-octadecenoyl)-sn-glycero-3-phosphocholine + H2O = (9Z-octadecenoyl)-sn-glycero-3-phosphocholine + (9Z)-octadecenoate + H(+). It carries out the reaction 1,2,3-tributanoylglycerol + H2O = dibutanoylglycerol + butanoate + H(+). The enzyme catalyses 1,2-dihexadecanoyl-sn-glycero-3-phosphocholine + H2O = hexadecanoyl-sn-glycero-3-phosphocholine + hexadecanoate + H(+). The catalysed reaction is 1,2-di-(9Z-octadecenoyl)-sn-glycerol + H2O = 2-(9Z-octadecenoyl)-glycerol + (9Z)-octadecenoate + H(+). It catalyses the reaction 1,2,3-tri-(9Z-octadecenoyl)-glycerol + H2O = 2,3-di-(9Z)-octadecenoyl-sn-glycerol + (9Z)-octadecenoate + H(+). It carries out the reaction 1-(9Z-octadecenoyl)-sn-glycero-3-phospho-L-serine + H2O = sn-glycero-3-phospho-L-serine + (9Z)-octadecenoate + H(+). The enzyme catalyses 1-hexadecanoyl-sn-glycero-3-phosphocholine + H2O = sn-glycerol 3-phosphocholine + hexadecanoate + H(+). The catalysed reaction is 1,3-di-(9Z-octadecenoyl)-glycerol + H2O = 3-(9Z-octadecenoyl)-sn-glycerol + (9Z)-octadecenoate + H(+). Its function is as follows. Catalyzes the hydrolysis of triglycerides and phospholipids present in circulating plasma lipoproteins, including chylomicrons, intermediate density lipoproteins (IDL), low density lipoproteins (LDL) of large size and high density lipoproteins (HDL), releasing free fatty acids (FFA) and smaller lipoprotein particles. Also exhibits lysophospholipase activity. Can hydrolyze both neutral lipid and phospholipid substrates but shows a greater binding affinity for neutral lipid substrates than phospholipid substrates. In native LDL, preferentially hydrolyzes the phosphatidylcholine species containing polyunsaturated fatty acids at sn-2 position. The sequence is that of Hepatic triacylglycerol lipase (LIPC) from Bos taurus (Bovine).